Here is a 197-residue protein sequence, read N- to C-terminus: Fucoxanthin-chlorophyll a-c binding protein E, chloroplastic (197 aa).

The N-terminal 31 residues, 1–31 (MKFVVFASLLASAARFAPAQQSARTSVATNM), are a transit peptide targeting the chloroplast. A run of 3 helical transmembrane segments spans residues 73 to 94 (ISMLAVAGYLVQENGIRLPGDI), 114 to 134 (ISGAGIAQIVAFIGFLELAVM), and 174 to 196 (GRAAQMGILALMVHEQLGVSLIP).

This sequence belongs to the fucoxanthin chlorophyll protein family. The LHC complex of chromophytic algae is composed of fucoxanthin, chlorophyll A and C bound non-covalently by fucoxanthin chlorophyll proteins (FCPs). The ratio of the pigments in LHC; fucoxanthin: chlorophyll C: chlorophyll A; (0.6-1): (0.1-0.3): (1).

The protein resides in the plastid. Its subcellular location is the chloroplast thylakoid membrane. Its function is as follows. The light-harvesting complex (LHC) functions as a light receptor, it captures and delivers excitation energy to photosystems with which it is closely associated. Energy is transferred from the carotenoid and chlorophyll C (or B) to chlorophyll A and the photosynthetic reaction centers where it is used to synthesize ATP and reducing power. The sequence is that of Fucoxanthin-chlorophyll a-c binding protein E, chloroplastic (FCPE) from Phaeodactylum tricornutum (Diatom).